Here is a 503-residue protein sequence, read N- to C-terminus: Arabinose import ATP-binding protein AraG (503 aa).

2 consecutive ABC transporter domains span residues 5 to 240 and 253 to 497; these read LRFD…MVGR and LGDV…LPQG. 37–44 is an ATP binding site; it reads GENGAGKS.

Belongs to the ABC transporter superfamily. Arabinose importer (TC 3.A.1.2.2) family. As to quaternary structure, the complex is composed of two ATP-binding proteins (AraG), two transmembrane proteins (AraH) and a solute-binding protein (AraF).

It is found in the cell inner membrane. The catalysed reaction is L-arabinose(out) + ATP + H2O = L-arabinose(in) + ADP + phosphate + H(+). In terms of biological role, part of the ABC transporter complex AraFGH involved in arabinose import. Responsible for energy coupling to the transport system. The polypeptide is Arabinose import ATP-binding protein AraG (Burkholderia pseudomallei (strain 1710b)).